The following is an 83-amino-acid chain: Transmembrane protein EP84R (83 aa).

The next 2 helical transmembrane spans lie at 31–51 (IIGV…IIIL) and 59–79 (TGSI…FLIY).

Belongs to the asfivirus EP84R family.

It localises to the virion membrane. The chain is Transmembrane protein EP84R from Ornithodoros (relapsing fever ticks).